The primary structure comprises 189 residues: dCTP deaminase, dUMP-forming (189 aa).

Residues 101–106 (KSSLGR), Asp119, 127–129 (TLE), Gln148, Tyr162, and Gln174 contribute to the dCTP site. Glu129 acts as the Proton donor/acceptor in catalysis. Residues 163 to 189 (GSSEAGSKYQGQRGPTPSKAYLNFNRS) are disordered.

This sequence belongs to the dCTP deaminase family. Homotrimer.

It catalyses the reaction dCTP + 2 H2O = dUMP + NH4(+) + diphosphate. The protein operates within pyrimidine metabolism; dUMP biosynthesis; dUMP from dCTP: step 1/1. Bifunctional enzyme that catalyzes both the deamination of dCTP to dUTP and the hydrolysis of dUTP to dUMP without releasing the toxic dUTP intermediate. The polypeptide is dCTP deaminase, dUMP-forming (Rhodococcus erythropolis (strain PR4 / NBRC 100887)).